Here is a 478-residue protein sequence, read N- to C-terminus: Violaxanthin de-epoxidase, chloroplastic (478 aa).

Positions 388-453 form a coiled coil; the sequence is LVERLEKKVE…RELSKEEMDV (66 aa).

It belongs to the calycin superfamily. Lipocalin family.

The protein resides in the plastid. It localises to the chloroplast thylakoid membrane. It carries out the reaction all-trans-violaxanthin + 2 L-ascorbate = all-trans-zeaxanthin + 2 L-dehydroascorbate + 2 H2O. In terms of biological role, part of the xanthophyll (or violaxanthin) cycle for controlling the concentration of zeaxanthin in chloroplasts. Catalyzes the two-step mono de-epoxidation reaction. Stereospecific for all-trans xanthophylls. Zeaxanthin induces the dissipation of excitation energy in the chlorophyll of the light-harvesting protein complex of photosystem II. The sequence is that of Violaxanthin de-epoxidase, chloroplastic (VDE1) from Nicotiana tabacum (Common tobacco).